A 352-amino-acid chain; its full sequence is Histidine protein kinase SaeS (352 aa).

A run of 2 helical transmembrane segments spans residues 9–29 and 41–61; these read QIIIGVISSVILTTIILVIAY and TLAITTMITSCLTLSICSIFI. A Histidine kinase domain is found at 130–349; it reads NLAHDLKTPL…TMTLTLKKFQ (220 aa). At H133 the chain carries Phosphohistidine; by autocatalysis.

Autophosphorylated.

Its subcellular location is the cell membrane. The enzyme catalyses ATP + protein L-histidine = ADP + protein N-phospho-L-histidine.. Member of the two-component regulatory system SaeR/SaeS. Probably functions as a membrane-associated protein kinase that upon sensing the appropriate signal, autophosphorylates and in turn activates the cytosolic response regulator SaeR. The sequence is that of Histidine protein kinase SaeS (saeS) from Staphylococcus epidermidis (strain ATCC 35984 / DSM 28319 / BCRC 17069 / CCUG 31568 / BM 3577 / RP62A).